A 317-amino-acid chain; its full sequence is Malate dehydrogenase (317 aa).

NAD(+) contacts are provided by residues 10–15 (GGGQIG) and Asp-34. Residues Arg-83 and Arg-89 each coordinate substrate. Residues Asn-96 and 119-121 (ISN) each bind NAD(+). Residues Asn-121 and Arg-152 each coordinate substrate. The active-site Proton acceptor is the His-176.

Belongs to the LDH/MDH superfamily. MDH type 3 family.

The enzyme catalyses (S)-malate + NAD(+) = oxaloacetate + NADH + H(+). Its function is as follows. Catalyzes the reversible oxidation of malate to oxaloacetate. This chain is Malate dehydrogenase, found in Geobacter metallireducens (strain ATCC 53774 / DSM 7210 / GS-15).